An 851-amino-acid chain; its full sequence is Thrombospondin type-1 domain-containing protein 1 (851 aa).

A signal peptide spans 1 to 24 (MKPMLKDFSNLLLVVLCDYVLGEA). Residues 25–412 (EYLLLQEPVH…SPQDPVKSNN (388 aa)) lie on the Extracellular side of the membrane. 6 N-linked (GlcNAc...) asparagine glycosylation sites follow: asparagine 53, asparagine 58, asparagine 69, asparagine 110, asparagine 135, and asparagine 304. The 54-residue stretch at 339-392 (IETWGPWQPWSPCSTTCGDAVRERRRLCVTSFPSRPSCSGMSSETSPCSLEECA) folds into the TSP type-1 domain. 3 disulfides stabilise this stretch: cysteine 351–cysteine 386, cysteine 355–cysteine 391, and cysteine 366–cysteine 376. A helical membrane pass occupies residues 413-433 (VVTVTGISLCLFIIFATVLIT). Residues 434 to 851 (LWRRFGRAPK…STLSVEKLVI (418 aa)) are Cytoplasmic-facing. Serine 462 is modified (phosphoserine). Disordered regions lie at residues 471 to 516 (SEPR…ESFQ), 626 to 646 (KSQI…HSRS), and 682 to 777 (SRMR…SSPI). The span at 685–695 (RTWDQMEDRCR) shows a compositional bias: basic and acidic residues. Positions 765 to 776 (SHRSASRKQSSP) are enriched in polar residues.

In terms of assembly, part of a complex composed of THSD1, PTK2/FAK1, TLN1 and VCL. Interacts with TLN1. Expressed in cerebral vascular endothelium.

The protein resides in the endosome membrane. It is found in the cell junction. The protein localises to the focal adhesion. Functionally, is a positive regulator of nascent focal adhesion assembly, involved in the modulation of endothelial cell attachment to the extracellular matrix. In Mus musculus (Mouse), this protein is Thrombospondin type-1 domain-containing protein 1 (Thsd1).